Consider the following 728-residue polypeptide: Catalase B (728 aa).

A signal peptide spans 1–15 (MRLTFIPSLIGVANA). A propeptide spanning residues 16–27 (VCPYMTGELNRR) is cleaved from the precursor. H102 is a catalytic residue. A glycan (N-linked (GlcNAc...) asparagine) is linked at N120. N175 is a catalytic residue. A heme-binding site is contributed by Y389. N448 and N551 each carry an N-linked (GlcNAc...) asparagine glycan.

Belongs to the catalase family. In terms of assembly, homotetramer. It depends on heme as a cofactor. N-glycosylated.

It is found in the secreted. The catalysed reaction is 2 H2O2 = O2 + 2 H2O. Its function is as follows. Occurs in almost all aerobically respiring organisms and serves to protect cells from the toxic effects of hydrogen peroxide. The protein is Catalase B (catB) of Aspergillus fumigatus (strain ATCC MYA-4609 / CBS 101355 / FGSC A1100 / Af293) (Neosartorya fumigata).